Here is a 487-residue protein sequence, read N- to C-terminus: L-tartrate/succinate antiporter (487 aa).

14 consecutive transmembrane segments (helical) span residues 10–30, 33–53, 54–74, 93–113, 137–157, 189–209, 236–256, 292–312, 313–333, 340–360, 370–390, 393–413, 418–438, and 462–482; these read YLAPLAVIAIIALLPLPAGLE, TWLYFAVFTGVIVGLILEPVP, GAVVAMVGISIIAILSPWLLF, WAVSGFSNSVIWLIFAAFMFG, TLFLGYAVMFSELILAPVTPS, IGSYIMWMGIVADCVTSAIFL, FLGMLPLSILLVLLVPWLAYV, LMVGALVLWIFGGDYIDAAMV, GYSVVALMLLLRIICWDDIVS, VFFWLASLITLATGLNNTGFI, SLSGYSPTIVMVALIVVFYLL, FFASATAYTSALAPMMIAAAL, IPLPVFCLMVGAAIGLGSILT, and LGAIFGLIFLVLLVITGLLWM.

The protein belongs to the SLC13A/DASS transporter (TC 2.A.47) family. DIT1 subfamily.

It is found in the cell inner membrane. The enzyme catalyses (2R,3R)-tartrate(out) + succinate(in) = (2R,3R)-tartrate(in) + succinate(out). Its function is as follows. Catalyzes the uptake of tartrate in exchange for intracellular succinate. Essential for anaerobic L-tartrate fermentation. This is L-tartrate/succinate antiporter (ttdT) from Escherichia coli O6:H1 (strain CFT073 / ATCC 700928 / UPEC).